Consider the following 33-residue polypeptide: Dermaseptin-4 (33 aa).

At L33 the chain carries Leucine amide.

Expressed by the skin glands.

It is found in the secreted. Has antiparasitic activity against trypomastigote form of T.cruzi (IC(50)=0.25 uM) in vitro but not against L.infantum. Probably acts by permeabilizing cell membranes. In vitro, shows no cytotoxicity against macrophages. Has antibacterial activity. The polypeptide is Dermaseptin-4 (Pithecopus nordestinus (Northeastern Brazilian leaf frog)).